Here is a 444-residue protein sequence, read N- to C-terminus: Ribulose bisphosphate carboxylase large chain (444 aa).

Lys5 bears the N6,N6,N6-trimethyllysine mark. Residues Asn114 and Thr164 each contribute to the substrate site. Lys166 serves as the catalytic Proton acceptor. Lys168 provides a ligand contact to substrate. Residues Lys192, Asp194, and Glu195 each coordinate Mg(2+). Lys192 carries the N6-carboxylysine modification. The active-site Proton acceptor is the His285. 3 residues coordinate substrate: Arg286, His318, and Ser370.

This sequence belongs to the RuBisCO large chain family. Type I subfamily. As to quaternary structure, heterohexadecamer of 8 large chains and 8 small chains; disulfide-linked. The disulfide link is formed within the large subunit homodimers. Requires Mg(2+) as cofactor. The disulfide bond which can form in the large chain dimeric partners within the hexadecamer appears to be associated with oxidative stress and protein turnover.

Its subcellular location is the plastid. The protein localises to the chloroplast. It catalyses the reaction 2 (2R)-3-phosphoglycerate + 2 H(+) = D-ribulose 1,5-bisphosphate + CO2 + H2O. It carries out the reaction D-ribulose 1,5-bisphosphate + O2 = 2-phosphoglycolate + (2R)-3-phosphoglycerate + 2 H(+). Functionally, ruBisCO catalyzes two reactions: the carboxylation of D-ribulose 1,5-bisphosphate, the primary event in carbon dioxide fixation, as well as the oxidative fragmentation of the pentose substrate in the photorespiration process. Both reactions occur simultaneously and in competition at the same active site. The chain is Ribulose bisphosphate carboxylase large chain from Botrychium strictum (Fern).